Reading from the N-terminus, the 542-residue chain is L-ornithine N(5)-monooxygenase (542 aa).

Residues 45–53 and Gln-64 contribute to the FAD site; that span reads EKHEVFRWH. Lys-69 provides a ligand contact to substrate. Residue 218-221 coordinates NADP(+); the sequence is SGQS. Substrate-binding positions include 263–266 and Asn-294; that span reads NEIF. 294–296 contacts NADP(+); the sequence is NYS. The disordered stretch occupies residues 443–472; it reads FFHDSSPSTASSSTVSTPPTSPETSRFSSP. Positions 447–472 are enriched in low complexity; that stretch reads SSPSTASSSTVSTPPTSPETSRFSSP. 518–520 is an FAD binding site; sequence TLL. Ser-521 contacts substrate.

This sequence belongs to the lysine N(6)-hydroxylase/L-ornithine N(5)-oxygenase family. As to quaternary structure, homotetramer. Requires FAD as cofactor.

It carries out the reaction L-ornithine + NADPH + O2 = N(5)-hydroxy-L-ornithine + NADP(+) + H2O. It catalyses the reaction L-ornithine + NADH + O2 = N(5)-hydroxy-L-ornithine + NAD(+) + H2O. The protein operates within siderophore biosynthesis. In terms of biological role, L-ornithine N(5)-monooxygenase; part of the gene cluster that mediates the biosynthesis of coprinoferrin, an acylated tripeptide hydroxamate siderophore. The biosynthesis of coprinoferrin depends on the hydroxylation of ornithine to N(5)-hydroxyornithine, catalyzed by the monooxygenase cpf2. The second step, the acylation of N(5)-hydroxy-L-ornithine to yield N(5)-hexanoyl-N(5)-hydroxyl-L-ornithine is catalyzed by a not yet identified acyltransferase. Finally, assembly of coprinoferrin is catalyzed by the nonribosomal peptide synthase (NRPS) cpf1 via amide bond formation between three N(5)-hexanoyl-N(5)-hydroxyl-L-ornithine molecules to release the linear trimer. Interestingly, proteins seemingly not directly related to biosynthesis, such as transcription factors, replication factors, and autophagy-related proteins, are conserved among the clusters homologous to the coprinoferrin cluster, suggesting that the cluster may also play developmental and cell biological functions. This is L-ornithine N(5)-monooxygenase from Coprinopsis cinerea (strain Okayama-7 / 130 / ATCC MYA-4618 / FGSC 9003) (Inky cap fungus).